The chain runs to 303 residues: Aspartate carbamoyltransferase catalytic subunit (303 aa).

Residues Arg-54 and Thr-55 each coordinate carbamoyl phosphate. An L-aspartate-binding site is contributed by Lys-82. Carbamoyl phosphate contacts are provided by Arg-104, His-132, and Gln-135. 2 residues coordinate L-aspartate: Arg-165 and Arg-221. The carbamoyl phosphate site is built by Gly-261 and Pro-262.

It belongs to the aspartate/ornithine carbamoyltransferase superfamily. ATCase family. In terms of assembly, heterododecamer (2C3:3R2) of six catalytic PyrB chains organized as two trimers (C3), and six regulatory PyrI chains organized as three dimers (R2).

The catalysed reaction is carbamoyl phosphate + L-aspartate = N-carbamoyl-L-aspartate + phosphate + H(+). The protein operates within pyrimidine metabolism; UMP biosynthesis via de novo pathway; (S)-dihydroorotate from bicarbonate: step 2/3. Catalyzes the condensation of carbamoyl phosphate and aspartate to form carbamoyl aspartate and inorganic phosphate, the committed step in the de novo pyrimidine nucleotide biosynthesis pathway. The protein is Aspartate carbamoyltransferase catalytic subunit of Koribacter versatilis (strain Ellin345).